The following is a 115-amino-acid chain: LSALLNTSILLRSGVTVTWAHHALMENNFDQCLQGLLFTVLLGLYFSFLQGLEYMEASFTIADSIYGSTFFLATGFHGLHVLIGTIFLMICILRHLSATFSQHHFGFEAAAWYWH.

The next 2 membrane-spanning stretches (helical) occupy residues Cys-32–Leu-52 and Phe-70–Ile-90.

It belongs to the cytochrome c oxidase subunit 3 family. In terms of assembly, component of the cytochrome c oxidase (complex IV, CIV), a multisubunit enzyme composed of a catalytic core of 3 subunits and several supernumerary subunits. The complex exists as a monomer or a dimer and forms supercomplexes (SCs) in the inner mitochondrial membrane with ubiquinol-cytochrome c oxidoreductase (cytochrome b-c1 complex, complex III, CIII).

It localises to the mitochondrion inner membrane. The enzyme catalyses 4 Fe(II)-[cytochrome c] + O2 + 8 H(+)(in) = 4 Fe(III)-[cytochrome c] + 2 H2O + 4 H(+)(out). In terms of biological role, component of the cytochrome c oxidase, the last enzyme in the mitochondrial electron transport chain which drives oxidative phosphorylation. The respiratory chain contains 3 multisubunit complexes succinate dehydrogenase (complex II, CII), ubiquinol-cytochrome c oxidoreductase (cytochrome b-c1 complex, complex III, CIII) and cytochrome c oxidase (complex IV, CIV), that cooperate to transfer electrons derived from NADH and succinate to molecular oxygen, creating an electrochemical gradient over the inner membrane that drives transmembrane transport and the ATP synthase. Cytochrome c oxidase is the component of the respiratory chain that catalyzes the reduction of oxygen to water. Electrons originating from reduced cytochrome c in the intermembrane space (IMS) are transferred via the dinuclear copper A center (CU(A)) of subunit 2 and heme A of subunit 1 to the active site in subunit 1, a binuclear center (BNC) formed by heme A3 and copper B (CU(B)). The BNC reduces molecular oxygen to 2 water molecules using 4 electrons from cytochrome c in the IMS and 4 protons from the mitochondrial matrix. This is Cytochrome c oxidase subunit 3 (COIII) from Artemia salina (Brine shrimp).